Reading from the N-terminus, the 784-residue chain is MVGREDAMGNDEAPPGSKKMFWRSASWSASRTASQVPEGDEQSLNIPCAISSGPSRRCPAAPLTPRSHHNSKARACLPPLQPLAISRRSLDEWPKAGSDDVGEWPHPPTPSGNKTGERLKLDLSSTQQRVTDKSSGLAKREKIAFFDKECSKVADHIYVGGDAVAKDKSILKNNGITHILNCVGFICPEYFKSDFCYRSLWLQDSPSEDITSILYDVFDYFEDVREQSGRIFVHCCQGVSRSTSLVIAYLMWREGQSFDDAFQYVKSARGIADPNMGFACQLLQCQKRVHAFPLSPTSLLRMYKMSPHSPYDPLHLVPKLLNDPCPGSLDSRGAFIIQLPSAIYIWVGRQCETIMEKDAKAAVCQIARYEKVEAPIMVVREGDEPVYYWDAFASILPMIGGSVIKVQPGDRKVDAYNLDFEIFQKAIEGGFVPTLASSNNEHETHLPARENSWSSLKCKFASRFDKGFRYVSKTPLSRVYSDSMMIVHSSGSPSSTTSSSSTASPPFLSPDSVCSTNSGNSLKSFSQSSGRSSLRPSIPPSLTLPKFSSLSLLPSQTSPKESRGVNTFLQPSPNRKASPSLAERRGSLKGSLKLPGLADSNRGTPAFTLHPDDSNDIVFNLEGIRNGDLYPPSDCKGTSVDSDLPEKEIISLISCSKSDRHKSGGDTDSSGQPLACRWPSMEMITKLSRAYLDSESVIAIPLPSDAVGETGSRNLYIWIGKSFSLDNNCSLVDSNKAADTVENVDWVQIGESILCQMDLPKDTPIKIVRESEDQTELLALLSAL.

2 disordered regions span residues 1–73 (MVGR…NSKA) and 94–118 (PKAGSDDVGEWPHPPTPSGNKTGER). Residues 22–34 (WRSASWSASRTAS) are compositionally biased toward low complexity. A phosphothreonine mark is found at threonine 64 and threonine 109. The Tyrosine-protein phosphatase domain maps to 149-291 (ECSKVADHIY…LLQCQKRVHA (143 aa)). Residue cysteine 235 is the Phosphocysteine intermediate of the active site. 235-241 (CCQGVSR) contributes to the substrate binding site. Residues 488-586 (HSSGSPSSTT…ASPSLAERRG (99 aa)) form a disordered region. Low complexity-rich tracts occupy residues 489–510 (SSGSPSSTTSSSSTASPPFLSP) and 521–553 (SLKSFSQSSGRSSLRPSIPPSLTLPKFSSLSLL). Positions 554-577 (PSQTSPKESRGVNTFLQPSPNRKA) are enriched in polar residues. Phosphoserine is present on residues serine 558 and serine 572.

As to quaternary structure, interacts with MPK6. May interact with MPK3 and MPK4. Phosphorylated on threonine and serine residues by MPK6.

Its subcellular location is the cytoplasm. The protein localises to the cytosol. The enzyme catalyses O-phospho-L-tyrosyl-[protein] + H2O = L-tyrosyl-[protein] + phosphate. Protein-tyrosine-phosphatase that acts as a negative regulator of MPK6 and MPK3 signaling by dephosphorylating and repressing MPK6 and MPK3. Modulates defense response by repressing salicylic acid (SA) production, camalexin biosynthesis and SNC1-mediated responses. Acts as a negative regulator of MPK6-mediated pathogen-associated molecular pattern (PAMP) responses, including MPK6 and MPK3 activation, accumulation of extracellular reactive oxygen species and inhibition of seedling growth. Involved in UV-B stress tolerance. May be involved in salt and genotoxic stress responses. The polypeptide is Protein-tyrosine-phosphatase MKP1 (MKP1) (Arabidopsis thaliana (Mouse-ear cress)).